Consider the following 29-residue polypeptide: Cycloviolacin-O22 (29 aa).

The cyclopeptide (Gly-Asn) cross-link spans 1 to 29 (GLPICGETCVGGTCNTPGCTCSWPVCTRN). Disulfide bonds link Cys-5/Cys-19, Cys-9/Cys-21, and Cys-14/Cys-26.

This is a cyclic peptide. As to expression, expressed in roots and runners but not in leaves, petals and petioles (at protein level).

Functionally, probably participates in a plant defense mechanism. This is Cycloviolacin-O22 from Viola odorata (Sweet violet).